We begin with the raw amino-acid sequence, 167 residues long: Large ribosomal subunit protein uL10 (167 aa).

This sequence belongs to the universal ribosomal protein uL10 family. As to quaternary structure, part of the ribosomal stalk of the 50S ribosomal subunit. The N-terminus interacts with L11 and the large rRNA to form the base of the stalk. The C-terminus forms an elongated spine to which L12 dimers bind in a sequential fashion forming a multimeric L10(L12)X complex.

Its function is as follows. Forms part of the ribosomal stalk, playing a central role in the interaction of the ribosome with GTP-bound translation factors. This chain is Large ribosomal subunit protein uL10, found in Lactiplantibacillus plantarum (strain ATCC BAA-793 / NCIMB 8826 / WCFS1) (Lactobacillus plantarum).